We begin with the raw amino-acid sequence, 41 residues long: Augerpeptide-s11a (41 aa).

Post-translationally, contains 4 disulfide bonds. Expressed by the venom duct.

The protein localises to the secreted. Its function is as follows. Does not elicit any observable symptomatology in C.elegans. The sequence is that of Augerpeptide-s11a from Terebra subulata (Chocolate spotted auger).